Consider the following 433-residue polypeptide: G2/mitotic-specific cyclin-B1 (433 aa).

Positions 19–47 (INMAGAKRVPTAPAATSKPGLRPRTALGD) are disordered. Residue K73 is modified to N6-acetyllysine. A disordered region spans residues 93–116 (PVSEPVPEPEPEPEPEPVKEEKLS). S126 is modified (phosphoserine; by CDK1). A Phosphoserine modification is found at S128. The residue at position 133 (S133) is a Phosphoserine; by PLK1. At S147 the chain carries Phosphoserine. Interaction with CDK2 regions lie at residues 169–177 (EYVKDIYAY) and 258–261 (YEEM). At T321 the chain carries Phosphothreonine.

Belongs to the cyclin family. Cyclin AB subfamily. Interacts with the CDC2 protein kinase to form a serine/threonine kinase holoenzyme complex also known as maturation promoting factor (MPF). The cyclin subunit imparts substrate specificity to the complex. Binds HEI10. Interacts with catalytically active RALBP1 and CDC2 during mitosis to form an endocytotic complex during interphase. Interacts with CCNF; interaction is required for nuclear localization. Interacts with CDK5RAP3. Interacts with RFPL4A and UBE2A. Interacts with INCA1. Post-translationally, ubiquitinated by the SCF(NIPA) complex during interphase, leading to its destruction. Deubiquitinated by USP22 during G2/M phase. In terms of processing, phosphorylated by PLK1 at Ser-133 on centrosomes during prophase: phosphorylation by PLK1 does not cause nuclear import. Phosphorylation at Ser-147 was also reported to be mediated by PLK1 but Ser-133 seems to be the primary phosphorylation site.

It is found in the cytoplasm. Its subcellular location is the nucleus. It localises to the cytoskeleton. The protein localises to the microtubule organizing center. The protein resides in the centrosome. Its function is as follows. Essential for the control of the cell cycle at the G2/M (mitosis) transition. This chain is G2/mitotic-specific cyclin-B1 (CCNB1), found in Homo sapiens (Human).